The primary structure comprises 149 residues: Nucleoside diphosphate kinase (149 aa).

Positions 9, 57, 85, 91, 102, and 112 each coordinate ATP. The Pros-phosphohistidine intermediate role is filled by H115.

This sequence belongs to the NDK family. It depends on Mg(2+) as a cofactor.

It localises to the cytoplasm. The catalysed reaction is a 2'-deoxyribonucleoside 5'-diphosphate + ATP = a 2'-deoxyribonucleoside 5'-triphosphate + ADP. It catalyses the reaction a ribonucleoside 5'-diphosphate + ATP = a ribonucleoside 5'-triphosphate + ADP. In terms of biological role, major role in the synthesis of nucleoside triphosphates other than ATP. The ATP gamma phosphate is transferred to the NDP beta phosphate via a ping-pong mechanism, using a phosphorylated active-site intermediate. This Methanospirillum hungatei JF-1 (strain ATCC 27890 / DSM 864 / NBRC 100397 / JF-1) protein is Nucleoside diphosphate kinase.